We begin with the raw amino-acid sequence, 961 residues long: Endochitinase A (961 aa).

The signal sequence occupies residues 1–21; that stretch reads MAPKLFTFVSALSGLASLASA. The GH18 domain occupies 28–339; it reads SNIAVYYGQG…EKIREILYDL (312 aa). Glu175 functions as the Proton donor in the catalytic mechanism. Disordered stretches follow at residues 338-720, 767-787, 813-842, and 912-933; these read DLDP…TTTE, TDVP…TADI, PPAT…GEVS, and HVPV…ASPT. Residues 342–355 are compositionally biased toward pro residues; sequence NHPPPTTSPTPTPT. Low complexity-rich tracts occupy residues 356–510, 519–544, 552–604, and 612–635; these read PSTT…STSS, SSTS…PVIS, TSSS…PETT, and TPGS…PATS. Polar residues predominate over residues 636 to 665; sequence GGHTETSTVSTSSANQTPSASTSKPLIPTN. Residues 666-720 show a composition bias toward low complexity; that stretch reads SASSTSTGSVTSTPSAPGVPSSSAGSDETATTSTTDSEPTSTSSGSVTAKPTTTE. A lipid anchor (GPI-anchor amidated glycine) is attached at Gly936. A propeptide spans 937 to 961 (removed in mature form); sequence AGSRYDVVKGVPALVALALSLLAVL.

It belongs to the glycosyl hydrolase 18 family. Chitinase class III subfamily. In terms of processing, O-glycosylated but not N-glycosylated.

Its subcellular location is the cell membrane. The protein localises to the secreted. It is found in the cell wall. The protein resides in the cell tip. It catalyses the reaction Random endo-hydrolysis of N-acetyl-beta-D-glucosaminide (1-&gt;4)-beta-linkages in chitin and chitodextrins.. Its function is as follows. GPI-anchored chitinase involved in the degradation of chitin, a component of the cell walls of fungi and exoskeletal elements of some animals (including worms and arthropods). Required to reshape the cell wall at the sites where cell wall remodeling and/or cell wall maturation actively take place such as sites of conidia formation. The chain is Endochitinase A (chiA) from Emericella nidulans (Aspergillus nidulans).